The following is a 461-amino-acid chain: Arginine biosynthesis bifunctional protein ArgJ, chloroplastic (461 aa).

6 residues coordinate substrate: Thr202, Lys228, Thr239, Glu326, Asn456, and Thr461. Thr239 acts as the Nucleophile in catalysis.

Belongs to the ArgJ family. In terms of assembly, heterodimer of an alpha and a beta chain.

It localises to the plastid. Its subcellular location is the chloroplast. The catalysed reaction is N(2)-acetyl-L-ornithine + L-glutamate = N-acetyl-L-glutamate + L-ornithine. The enzyme catalyses L-glutamate + acetyl-CoA = N-acetyl-L-glutamate + CoA + H(+). Its pathway is amino-acid biosynthesis; L-arginine biosynthesis; L-ornithine and N-acetyl-L-glutamate from L-glutamate and N(2)-acetyl-L-ornithine (cyclic): step 1/1. It participates in amino-acid biosynthesis; L-arginine biosynthesis; N(2)-acetyl-L-ornithine from L-glutamate: step 1/4. Its function is as follows. Catalyzes two activities which are involved in the cyclic version of arginine biosynthesis: the synthesis of acetylglutamate from glutamate and acetyl-CoA, and of ornithine by transacetylation between acetylornithine and glutamate. This is Arginine biosynthesis bifunctional protein ArgJ, chloroplastic from Ostreococcus lucimarinus (strain CCE9901).